A 195-amino-acid polypeptide reads, in one-letter code: IMP cyclohydrolase (195 aa).

The protein belongs to the archaeal IMP cyclohydrolase family.

The catalysed reaction is IMP + H2O = 5-formamido-1-(5-phospho-D-ribosyl)imidazole-4-carboxamide. It functions in the pathway purine metabolism; IMP biosynthesis via de novo pathway; IMP from 5-formamido-1-(5-phospho-D-ribosyl)imidazole-4-carboxamide: step 1/1. In terms of biological role, catalyzes the cyclization of 5-formylamidoimidazole-4-carboxamide ribonucleotide to IMP. In Haloquadratum walsbyi (strain DSM 16790 / HBSQ001), this protein is IMP cyclohydrolase.